The chain runs to 341 residues: Ferredoxin--NADP reductase 2 (341 aa).

D42, Q50, Y55, I95, F129, D294, and S335 together coordinate FAD.

It belongs to the ferredoxin--NADP reductase type 2 family. As to quaternary structure, homodimer. FAD is required as a cofactor.

It catalyses the reaction 2 reduced [2Fe-2S]-[ferredoxin] + NADP(+) + H(+) = 2 oxidized [2Fe-2S]-[ferredoxin] + NADPH. In Chloroherpeton thalassium (strain ATCC 35110 / GB-78), this protein is Ferredoxin--NADP reductase 2.